The following is a 408-amino-acid chain: Serine/threonine transporter SstT (408 aa).

9 helical membrane passes run Gly14–Ser34, Ile43–Leu63, Ile83–Phe103, Ala143–Leu163, Val181–Ala201, Leu219–Phe239, Tyr247–Ala269, Ile290–Leu310, and Val332–Ile352.

This sequence belongs to the dicarboxylate/amino acid:cation symporter (DAACS) (TC 2.A.23) family.

The protein resides in the cell inner membrane. It carries out the reaction L-serine(in) + Na(+)(in) = L-serine(out) + Na(+)(out). It catalyses the reaction L-threonine(in) + Na(+)(in) = L-threonine(out) + Na(+)(out). Functionally, involved in the import of serine and threonine into the cell, with the concomitant import of sodium (symport system). The polypeptide is Serine/threonine transporter SstT (Campylobacter lari (strain RM2100 / D67 / ATCC BAA-1060)).